We begin with the raw amino-acid sequence, 326 residues long: ELAV-like protein 1 (326 aa).

The residue at position 2 (Ser2) is an N-acetylserine. Ser2 carries the phosphoserine modification. The RRM 1 domain maps to Thr20 to Pro98. Phosphoserine is present on residues Ser100 and Ser158. Residues Ala106–Asn186 enclose the RRM 2 domain. A Glycyl lysine isopeptide (Lys-Gly) (interchain with G-Cter in SUMO2) cross-link involves residue Lys191. Ser197 and Ser202 each carry phosphoserine. Arg206 is modified (omega-N-methylarginine). Arg217 carries the asymmetric dimethylarginine; by CARM1; alternate modification. An Omega-N-methylarginine; alternate modification is found at Arg217. 2 positions are modified to phosphoserine: Ser221 and Ser318. An RRM 3 domain is found at Trp244–Asn322.

The protein belongs to the RRM elav family. As to quaternary structure, monomer and homodimer (in vitro). Interacts with ANP32A. Interacts with ZNF385A; the interaction is indirect and mRNA-dependent and may regulate p53/TP53 expression. Identified in a mRNP complex, at least composed of DHX9, DDX3X, ELAVL1, HNRNPU, IGF2BP1, ILF3, PABPC1, PCBP2, PTBP2, STAU1, STAU2, SYNCRIP and YBX1. Interacts with AGO1 and AGO2. Interacts with IGF2BP1; the interaction is enhanced by SEPIN14P20 peptide RBPR. Interacts with IGF2BP2 and IGF2BP3. Interacts with HNRNPL. Interacts with DHX36; this interaction occurs in a RNA-dependent manner. Interacts with ILF3; this interaction occurs in a RNA-dependent manner. Interacts with PLEKHN1. Interacts with SHFL; the interaction increases in presence of RNA. Interacts with YBX1; interaction recruits ELAVL1 on C5-methylcytosine (m5C)-containing mRNAs, thereby promoting mRNA stability. Interacts with FXR1. Phosphorylated by MAPKAPK2. Phosphorylated by PRKCD. In terms of processing, methylated at Arg-217 by CARM1 in macrophages in response to LPS challenge. As to expression, ubiquitous. Detected in brain, liver, thymus and muscle.

It localises to the cytoplasm. The protein resides in the nucleus. Its subcellular location is the stress granule. The protein localises to the P-body. Its function is as follows. RNA-binding protein that binds to the 3'-UTR region of mRNAs and increases their stability. Involved in embryonic stem cell (ESC) differentiation: preferentially binds mRNAs that are not methylated by N6-methyladenosine (m6A), stabilizing them, promoting ESC differentiation. Has also been shown to be capable of binding to m6A-containing mRNAs and contributes to MYC stability by binding to m6A-containing MYC mRNAs. Binds to poly-U elements and AU-rich elements (AREs) in the 3'-UTR of target mRNAs. Binds avidly to the AU-rich element in FOS and IL3/interleukin-3 mRNAs. In the case of the FOS AU-rich element, binds to a core element of 27 nucleotides that contain AUUUA, AUUUUA, and AUUUUUA motifs. Binds preferentially to the 5'-UUUU[AG]UUU-3' motif in vitro. With ZNF385A, binds the 3'-UTR of p53/TP53 mRNA to control their nuclear export induced by CDKN2A. Hence, may regulate p53/TP53 expression and mediate in part the CDKN2A anti-proliferative activity. May also bind with ZNF385A the CCNB1 mRNA. Increases the stability of the leptin mRNA harboring an AU-rich element (ARE) in its 3' UTR. The polypeptide is ELAV-like protein 1 (ELAVL1) (Homo sapiens (Human)).